The chain runs to 1115 residues: Serine/threonine-protein kinase/endoribonuclease IRE1 (1115 aa).

Positions 1–18 (MRLLRRNMLVLTLLVCVF) are cleaved as a signal peptide. Over 19–526 (SSIISCSIPL…RELDEKNQNS (508 aa)) the chain is Lumenal. Residues N111, N213, N298, and N397 are each glycosylated (N-linked (GlcNAc...) asparagine). A helical transmembrane segment spans residues 527–555 (LLLKFGSLVYRIIETGVFLLLFLIFCAIL). The Cytoplasmic portion of the chain corresponds to 556-1115 (QRFKILPPLY…DQILREFLYS (560 aa)). The segment at 617-658 (GSLKSEKDNDDADEDDEKSLDLTTEKKKRKRGSRGGKKGRKS) is disordered. Acidic residues predominate over residues 624-634 (DNDDADEDDEK). Basic residues predominate over residues 642–658 (KKKRKRGSRGGKKGRKS). The 307-residue stretch at 674–980 (VVSEKILGYG…AMKVLRHPLF (307 aa)) folds into the Protein kinase domain. ADP-binding residues include S684, K702, E746, C748, and N751. D797 (proton acceptor) is an active-site residue. The Mg(2+) site is built by N802 and D828. Phosphoserine; by autocatalysis occurs at positions 840 and 841. T844 carries the phosphothreonine; by autocatalysis modification. The 133-residue stretch at 983 to 1115 (KSKKLEFLLK…DQILREFLYS (133 aa)) folds into the KEN domain.

Belongs to the protein kinase superfamily. Ser/Thr protein kinase family. In terms of assembly, homodimer; in response to the accumulation of unfolded proteins. Dimerization of lumenal domains help position the cytoplasmic kinase domains optimally for autophosphorylation to initiate the unfolded protein response. Dimerization of the kinase domain is important for ribonuclease activity. Interacts (when phosphorylated) with PTC2; the interaction is direct and serves to attenuate the endoplasmic reticulum unfolded protein response. Mg(2+) is required as a cofactor. Autophosphorylated mainly on serine residues; phosphorylation enables nucleotide binding by the active site.

It localises to the endoplasmic reticulum membrane. The enzyme catalyses L-seryl-[protein] + ATP = O-phospho-L-seryl-[protein] + ADP + H(+). The catalysed reaction is L-threonyl-[protein] + ATP = O-phospho-L-threonyl-[protein] + ADP + H(+). With respect to regulation, the kinase domain is activated by trans-autophosphorylation. Kinase activity is required for activation of the endoribonuclease domain. Inactivated by dephosphorylation via recruitment of PTC2. Senses unfolded proteins in the lumen of the endoplasmic reticulum via its N-terminal domain which leads to enzyme auto-activation. The active endoribonuclease domain splices HAC1 precursor mRNA to produce the mature form which then induces transcription of UPR target genes. The protein is Serine/threonine-protein kinase/endoribonuclease IRE1 (IRE1) of Saccharomyces cerevisiae (strain ATCC 204508 / S288c) (Baker's yeast).